The sequence spans 533 residues: Lysine--tRNA ligase (533 aa).

The 'HIGH' region signature appears at 28-36; the sequence is PSGHIHIGN. The short motif at 278–282 is the 'KMSKS' region element; sequence PMSSS.

It belongs to the class-I aminoacyl-tRNA synthetase family.

The protein resides in the cytoplasm. It carries out the reaction tRNA(Lys) + L-lysine + ATP = L-lysyl-tRNA(Lys) + AMP + diphosphate. This Methanococcus maripaludis (strain DSM 14266 / JCM 13030 / NBRC 101832 / S2 / LL) protein is Lysine--tRNA ligase (lysS).